The primary structure comprises 264 residues: uncharacterized protein (264 aa).

The a divalent metal cation site is built by His5, His7, Glu93, His134, His158, and Asp208.

It belongs to the metallo-dependent hydrolases superfamily. TatD-type hydrolase family. A divalent metal cation is required as a cofactor.

This is an uncharacterized protein from Mycobacterium tuberculosis (strain ATCC 25618 / H37Rv).